Here is a 306-residue protein sequence, read N- to C-terminus: Non-specific ribonucleoside hydrolase RihC (306 aa).

Residue histidine 235 is part of the active site.

The protein belongs to the IUNH family. RihC subfamily.

Functionally, hydrolyzes both purine and pyrimidine ribonucleosides with a broad-substrate specificity. The chain is Non-specific ribonucleoside hydrolase RihC from Salmonella heidelberg (strain SL476).